A 452-amino-acid chain; its full sequence is Exodeoxyribonuclease 7 large subunit (452 aa).

This sequence belongs to the XseA family. Heterooligomer composed of large and small subunits.

The protein resides in the cytoplasm. It catalyses the reaction Exonucleolytic cleavage in either 5'- to 3'- or 3'- to 5'-direction to yield nucleoside 5'-phosphates.. Its function is as follows. Bidirectionally degrades single-stranded DNA into large acid-insoluble oligonucleotides, which are then degraded further into small acid-soluble oligonucleotides. The chain is Exodeoxyribonuclease 7 large subunit from Bacillus anthracis (strain A0248).